The chain runs to 315 residues: uncharacterized protein (315 aa).

Basic residues predominate over residues 296 to 308 (RSKLRKGTHKRTP). Residues 296 to 315 (RSKLRKGTHKRTPGRAGDAD) are disordered.

This sequence belongs to the metallo-dependent hydrolases superfamily. Peptidase M19 family.

This is an uncharacterized protein from Acinetobacter calcoaceticus.